A 312-amino-acid chain; its full sequence is tRNA dimethylallyltransferase (312 aa).

ATP is bound at residue Gly-11–Thr-18. Residue Thr-13 to Thr-18 coordinates substrate. The tract at residues Asp-36–Gln-39 is interaction with substrate tRNA.

Belongs to the IPP transferase family. As to quaternary structure, monomer. It depends on Mg(2+) as a cofactor.

It carries out the reaction adenosine(37) in tRNA + dimethylallyl diphosphate = N(6)-dimethylallyladenosine(37) in tRNA + diphosphate. Functionally, catalyzes the transfer of a dimethylallyl group onto the adenine at position 37 in tRNAs that read codons beginning with uridine, leading to the formation of N6-(dimethylallyl)adenosine (i(6)A). The chain is tRNA dimethylallyltransferase from Thermosynechococcus vestitus (strain NIES-2133 / IAM M-273 / BP-1).